Here is a 328-residue protein sequence, read N- to C-terminus: Malate dehydrogenase (328 aa).

Residue 11 to 17 (GAAGQIG) participates in NAD(+) binding. Arg92 and Arg98 together coordinate substrate. NAD(+) is bound by residues Asn105, Gln112, and 129–131 (VGN). Substrate-binding residues include Asn131 and Arg162. The active-site Proton acceptor is the His187.

Belongs to the LDH/MDH superfamily. MDH type 2 family.

It carries out the reaction (S)-malate + NAD(+) = oxaloacetate + NADH + H(+). Functionally, catalyzes the reversible oxidation of malate to oxaloacetate. In Coxiella burnetii (strain CbuG_Q212) (Coxiella burnetii (strain Q212)), this protein is Malate dehydrogenase.